Reading from the N-terminus, the 160-residue chain is Major strawberry allergen Fra a 1-B (160 aa).

It belongs to the BetVI family. In terms of assembly, monomer.

This is Major strawberry allergen Fra a 1-B from Fragaria ananassa (Strawberry).